A 107-amino-acid chain; its full sequence is Urease subunit beta (107 aa).

This sequence belongs to the urease beta subunit family. In terms of assembly, heterotrimer of UreA (gamma), UreB (beta) and UreC (alpha) subunits. Three heterotrimers associate to form the active enzyme.

Its subcellular location is the cytoplasm. It carries out the reaction urea + 2 H2O + H(+) = hydrogencarbonate + 2 NH4(+). Its pathway is nitrogen metabolism; urea degradation; CO(2) and NH(3) from urea (urease route): step 1/1. In Teredinibacter turnerae (strain ATCC 39867 / T7901), this protein is Urease subunit beta.